The primary structure comprises 179 residues: Endoribonuclease YbeY (179 aa).

Residues His-148, His-152, and His-158 each contribute to the Zn(2+) site.

It belongs to the endoribonuclease YbeY family. Requires Zn(2+) as cofactor.

The protein localises to the cytoplasm. In terms of biological role, single strand-specific metallo-endoribonuclease involved in late-stage 70S ribosome quality control and in maturation of the 3' terminus of the 16S rRNA. The chain is Endoribonuclease YbeY from Prochlorococcus marinus (strain MIT 9312).